The primary structure comprises 396 residues: Beta-1,4-galactosyltransferase 3 (396 aa).

The Cytoplasmic portion of the chain corresponds to Met1 to Cys10. A helical; Signal-anchor for type II membrane protein transmembrane segment spans residues Thr11–Phe31. The Lumenal segment spans residues Arg32 to His396. Asn57 is a glycosylation site (N-linked (GlcNAc...) asparagine). Cys80 and Cys122 are disulfide-bonded. Pro133–Arg137 serves as a coordination point for UDP-alpha-D-galactose. Residue Asn169 is glycosylated (N-linked (GlcNAc...) asparagine). UDP-alpha-D-galactose is bound by residues Phe172–Arg174, Val199–Asp200, Tyr229, and Trp261. Cys193 and Cys212 are oxidised to a cystine. Asp200 contributes to the Mn(2+) binding site. Residue Gly263–Asp266 participates in N-acetyl-D-glucosamine binding. His294 provides a ligand contact to Mn(2+). His294–Gly296 lines the UDP-alpha-D-galactose pocket. Residue Arg306 participates in N-acetyl-D-glucosamine binding. An N-linked (GlcNAc...) asparagine glycan is attached at Asn340. The segment at Ile341–His396 is disordered. Polar residues predominate over residues Arg353–Phe368. Asn388 carries N-linked (GlcNAc...) asparagine glycosylation.

It belongs to the glycosyltransferase 7 family. Requires Mn(2+) as cofactor.

It localises to the golgi apparatus. The protein localises to the golgi stack membrane. It catalyses the reaction an N-acetyl-beta-D-glucosaminyl derivative + UDP-alpha-D-galactose = a beta-D-galactosyl-(1-&gt;4)-N-acetyl-beta-D-glucosaminyl derivative + UDP + H(+). The enzyme catalyses N-acetyl-D-glucosamine + UDP-alpha-D-galactose = beta-D-galactosyl-(1-&gt;4)-N-acetyl-D-glucosamine + UDP + H(+). The catalysed reaction is a beta-D-GlcNAc-(1-&gt;3)-beta-D-Gal-(1-&gt;4)-beta-D-Glc-(1&lt;-&gt;1)-Cer(d18:1(4E)) + UDP-alpha-D-galactose = a neolactoside nLc4Cer(d18:1(4E)) + UDP + H(+). It carries out the reaction a beta-D-glucosylceramide + UDP-alpha-D-galactose = a beta-D-galactosyl-(1-&gt;4)-beta-D-glucosyl-(1&lt;-&gt;1)-ceramide + UDP + H(+). It catalyses the reaction a neolactoside IV(3)-beta-GlcNAc-nLc4Cer + UDP-alpha-D-galactose = a neolactoside nLc6Cer + UDP + H(+). It functions in the pathway protein modification; protein glycosylation. In terms of biological role, responsible for the synthesis of complex-type N-linked oligosaccharides in many glycoproteins as well as the carbohydrate moieties of glycolipids. The polypeptide is Beta-1,4-galactosyltransferase 3 (B4GALT3) (Bos taurus (Bovine)).